The primary structure comprises 484 residues: Ferrochelatase-2, chloroplastic (484 aa).

The protein belongs to the ferrochelatase family.

Its subcellular location is the plastid. It localises to the chloroplast. The enzyme catalyses heme b + 2 H(+) = protoporphyrin IX + Fe(2+). The protein operates within porphyrin-containing compound metabolism; protoheme biosynthesis; protoheme from protoporphyrin-IX: step 1/1. Its function is as follows. Catalyzes the ferrous insertion into protoporphyrin IX. In Hordeum vulgare (Barley), this protein is Ferrochelatase-2, chloroplastic (HEMH).